The sequence spans 481 residues: 4-O-methyl-glucuronoyl methylesterase (481 aa).

An N-terminal signal peptide occupies residues 1 to 21 (MVSQTVVSSLLVVLGAAGVRA). One can recognise a CBM1 domain in the interval 23-59 (QRQSLWGQCGGSGWSGPTLCVDGAWCNPQNQWYHQCI). Disulfide bonds link cysteine 108–cysteine 143, cysteine 292–cysteine 428, and cysteine 324–cysteine 400. The GXSYXG catalytic site motif motif lies at 291–296 (GCSRNG). Serine 293 functions as the Nucleophile in the catalytic mechanism. Residues lysine 297, glutamine 339, glutamate 347, and tryptophan 391 each coordinate substrate. Histidine 427 acts as the Proton donor/acceptor in catalysis.

The protein belongs to the carbohydrate esterase 15 (CE15) family.

The protein localises to the secreted. It catalyses the reaction a 4-O-methyl-alpha-D-glucuronosyl ester derivative + H2O = 4-O-methyl-alpha-D-glucuronate derivative + an alcohol + H(+). In terms of biological role, glucuronoyl esterase which may play a significant role in biomass degradation, as it is considered to disconnect hemicellulose from lignin through the hydrolysis of the ester bond between 4-O-methyl-D-glucuronic acid residues of glucuronoxylans and aromatic alcohols of lignin. The chain is 4-O-methyl-glucuronoyl methylesterase from Podospora anserina (strain S / ATCC MYA-4624 / DSM 980 / FGSC 10383) (Pleurage anserina).